Consider the following 413-residue polypeptide: Protein arginine N-methyltransferase 2 (413 aa).

2 disordered regions span residues Asp-65–Val-85 and Glu-148–Gln-178. The segment covering Glu-148 to Gly-173 has biased composition (acidic residues). The region spanning Thr-192–Asp-413 is the RMT2 domain. Residues Tyr-201, Met-230, His-250–Val-255, Glu-271–His-273, Trp-298–Gln-299, and Asp-318 each bind S-adenosyl-L-methionine.

Belongs to the class I-like SAM-binding methyltransferase superfamily. RMT2 methyltransferase family. In terms of assembly, monomer.

It localises to the cytoplasm. The protein localises to the nucleus. S-adenosyl-L-methionine-dependent protein-arginine N-methyltransferase that methylates the delta-nitrogen atom of arginine residues to form N5-methylarginine (type IV) in target proteins. Monomethylates ribosomal protein L12. This Aspergillus oryzae (strain ATCC 42149 / RIB 40) (Yellow koji mold) protein is Protein arginine N-methyltransferase 2.